The chain runs to 545 residues: Esterase-5C (545 aa).

The first 19 residues, M1 to A19, serve as a signal peptide directing secretion. A disulfide bridge links C84 with C103. A glycan (N-linked (GlcNAc...) asparagine) is linked at N113. Catalysis depends on S207, which acts as the Acyl-ester intermediate. A disulfide bridge links C259 with C271. N-linked (GlcNAc...) asparagine glycosylation is present at N421. The active-site Charge relay system is H467. N507 carries N-linked (GlcNAc...) asparagine glycosylation. A disulfide bridge connects residues C515 and C536.

The protein belongs to the type-B carboxylesterase/lipase family.

The protein resides in the secreted. The catalysed reaction is a carboxylic ester + H2O = an alcohol + a carboxylate + H(+). The sequence is that of Esterase-5C (Est-5C) from Drosophila persimilis (Fruit fly).